Consider the following 155-residue polypeptide: Ribosome maturation factor RimP (155 aa).

The protein belongs to the RimP family.

Its subcellular location is the cytoplasm. Its function is as follows. Required for maturation of 30S ribosomal subunits. This is Ribosome maturation factor RimP from Gemmatimonas aurantiaca (strain DSM 14586 / JCM 11422 / NBRC 100505 / T-27).